Here is a 407-residue protein sequence, read N- to C-terminus: Imidazolonepropionase (407 aa).

Histidine 72 and histidine 74 together coordinate Fe(3+). Positions 72 and 74 each coordinate Zn(2+). Positions 81, 144, and 177 each coordinate 4-imidazolone-5-propanoate. Tyrosine 144 provides a ligand contact to N-formimidoyl-L-glutamate. Histidine 242 contacts Fe(3+). Residue histidine 242 coordinates Zn(2+). Position 245 (glutamine 245) interacts with 4-imidazolone-5-propanoate. Position 317 (aspartate 317) interacts with Fe(3+). Position 317 (aspartate 317) interacts with Zn(2+). Positions 319 and 321 each coordinate N-formimidoyl-L-glutamate. A 4-imidazolone-5-propanoate-binding site is contributed by threonine 322.

This sequence belongs to the metallo-dependent hydrolases superfamily. HutI family. Zn(2+) serves as cofactor. It depends on Fe(3+) as a cofactor.

Its subcellular location is the cytoplasm. It carries out the reaction 4-imidazolone-5-propanoate + H2O = N-formimidoyl-L-glutamate. It functions in the pathway amino-acid degradation; L-histidine degradation into L-glutamate; N-formimidoyl-L-glutamate from L-histidine: step 3/3. Its function is as follows. Catalyzes the hydrolytic cleavage of the carbon-nitrogen bond in imidazolone-5-propanoate to yield N-formimidoyl-L-glutamate. It is the third step in the universal histidine degradation pathway. This is Imidazolonepropionase from Aliivibrio salmonicida (strain LFI1238) (Vibrio salmonicida (strain LFI1238)).